We begin with the raw amino-acid sequence, 571 residues long: Septation ring formation regulator EzrA (571 aa).

At 1-3 (MYY) the chain is on the extracellular side. The helical transmembrane segment at 4-22 (MLIGFIIVVIAVIGAGYIL) threads the bilayer. Topologically, residues 23–571 (KRKHYQRINE…ESKVSVDDIE (549 aa)) are cytoplasmic. 4 coiled-coil regions span residues 248-298 (LAQM…DTLE), 326-374 (DALA…ASGE), 400-437 (KFAE…ERER), and 478-529 (RIAE…ENHF).

Belongs to the EzrA family.

It localises to the cell membrane. Negative regulator of FtsZ ring formation; modulates the frequency and position of FtsZ ring formation. Inhibits FtsZ ring formation at polar sites. Interacts either with FtsZ or with one of its binding partners to promote depolymerization. The protein is Septation ring formation regulator EzrA of Listeria monocytogenes serovar 1/2a (strain ATCC BAA-679 / EGD-e).